We begin with the raw amino-acid sequence, 146 residues long: Nuclear export protein (146 aa).

Interacts with host HSC70.

It is found in the host cytoplasm. Its function is as follows. May mediate the nuclear export of encapsidated genomic RNAs (ribonucleoproteins, RNPs). Interaction of viral NEP with M1-Hsc70 is thought to promote nuclear export of the viral encapsidated genomes. This chain is Nuclear export protein, found in Infectious salmon anemia virus (isolate Atlantic salmon/Norway/810/9/99) (ISAV).